An 853-amino-acid polypeptide reads, in one-letter code: DNA mismatch repair protein MutS (853 aa).

ATP is bound at residue 614-621; the sequence is GPNMGGKS.

The protein belongs to the DNA mismatch repair MutS family.

In terms of biological role, this protein is involved in the repair of mismatches in DNA. It is possible that it carries out the mismatch recognition step. This protein has a weak ATPase activity. The protein is DNA mismatch repair protein MutS of Escherichia coli O6:K15:H31 (strain 536 / UPEC).